The sequence spans 141 residues: UPF0225 protein Rmet_0111 (141 aa).

This sequence belongs to the UPF0225 family.

This Cupriavidus metallidurans (strain ATCC 43123 / DSM 2839 / NBRC 102507 / CH34) (Ralstonia metallidurans) protein is UPF0225 protein Rmet_0111.